A 512-amino-acid chain; its full sequence is Probable DNA ligase (512 aa).

Residue Glu208 participates in ATP binding. The N6-AMP-lysine intermediate role is filled by Lys210. ATP is bound by residues Arg215, Arg230, Glu259, Phe299, Arg374, and Lys380.

Belongs to the ATP-dependent DNA ligase family. Mg(2+) is required as a cofactor.

It catalyses the reaction ATP + (deoxyribonucleotide)n-3'-hydroxyl + 5'-phospho-(deoxyribonucleotide)m = (deoxyribonucleotide)n+m + AMP + diphosphate.. Its function is as follows. DNA ligase that seals nicks in double-stranded DNA during DNA replication, DNA recombination and DNA repair. This is Probable DNA ligase from Streptomyces coelicolor (strain ATCC BAA-471 / A3(2) / M145).